A 112-amino-acid polypeptide reads, in one-letter code: DNA-binding protein TSIB_0525 (112 aa).

Belongs to the PDCD5 family.

This chain is DNA-binding protein TSIB_0525, found in Thermococcus sibiricus (strain DSM 12597 / MM 739).